A 212-amino-acid chain; its full sequence is Fibrillarin-like rRNA/tRNA 2'-O-methyltransferase (212 aa).

Residues 73 to 74 (TT), 91 to 92 (EI), 116 to 117 (DA), and 136 to 139 (DVAQ) contribute to the S-adenosyl-L-methionine site.

Belongs to the methyltransferase superfamily. Fibrillarin family. As to quaternary structure, interacts with nop5. Component of box C/D small ribonucleoprotein (sRNP) particles that contain rpl7ae, FlpA and nop5, plus a guide RNA.

Functionally, involved in pre-rRNA and tRNA processing. Utilizes the methyl donor S-adenosyl-L-methionine to catalyze the site-specific 2'-hydroxyl methylation of ribose moieties in rRNA and tRNA. Site specificity is provided by a guide RNA that base pairs with the substrate. Methylation occurs at a characteristic distance from the sequence involved in base pairing with the guide RNA. The chain is Fibrillarin-like rRNA/tRNA 2'-O-methyltransferase from Methanothrix thermoacetophila (strain DSM 6194 / JCM 14653 / NBRC 101360 / PT) (Methanosaeta thermophila).